The primary structure comprises 445 residues: UPF0210 protein LACR_1020 (445 aa).

This sequence belongs to the UPF0210 family. Homodimer.

In Lactococcus lactis subsp. cremoris (strain SK11), this protein is UPF0210 protein LACR_1020.